Consider the following 154-residue polypeptide: Cyclin-dependent protein kinase inhibitor SMR11 (154 aa).

Residues 1 to 44 form a disordered region; the sequence is MEQEEPCEAKETASSSIEPKTPNPNVPDSIPAIDSDSSLSEEEI. The segment covering 27 to 38 has biased composition (low complexity); the sequence is PDSIPAIDSDSS.

As to quaternary structure, interacts with CYCB2-4.

Its function is as follows. Probable cyclin-dependent protein kinase (CDK) inhibitor that functions as a repressor of mitosis in the endoreduplication cell cycle. This chain is Cyclin-dependent protein kinase inhibitor SMR11, found in Arabidopsis thaliana (Mouse-ear cress).